The chain runs to 267 residues: Thiamine pyrophosphokinase 2 (267 aa).

It belongs to the thiamine pyrophosphokinase family. In terms of tissue distribution, expressed in leaves and at lower levels in flowers.

It is found in the cytoplasm. The protein resides in the cytosol. It carries out the reaction thiamine + ATP = thiamine diphosphate + AMP + H(+). It functions in the pathway cofactor biosynthesis; thiamine diphosphate biosynthesis; thiamine diphosphate from thiamine: step 1/1. Its function is as follows. Catalyzes the phosphorylation of thiamine to thiamine pyrophosphate (TPP). TPP is an active cofactor for enzymes involved in glycolysis and energy production. Plant leaves require high levels of TPP for photosynthesis and carbohydrate metabolism. This is Thiamine pyrophosphokinase 2 from Arabidopsis thaliana (Mouse-ear cress).